Reading from the N-terminus, the 219-residue chain is MDRQVKGILGAKLGMTQVWDNNRVVPVTVVQAGPCVVSQVRSHQKDGYAAVQLAYGAIDPRKVKKPISGHYTKADVAPRRHIVELRTTDAAEYSLGQEVTVEQFPAGISVDVTGKTKGKGYAGPMKRHGFHGLRASHGVERKHRSPGSIGGCATPGRVFKGTRMAGRMGGVRYTVQNLTVQAVDTENNLLLVRGAIPGPKGALVLVRTAAKAKKGGAAK.

Belongs to the universal ribosomal protein uL3 family. Part of the 50S ribosomal subunit. Forms a cluster with proteins L14 and L19.

In terms of biological role, one of the primary rRNA binding proteins, it binds directly near the 3'-end of the 23S rRNA, where it nucleates assembly of the 50S subunit. This Salinispora arenicola (strain CNS-205) protein is Large ribosomal subunit protein uL3.